Reading from the N-terminus, the 100-residue chain is Small ribosomal subunit protein uS14 (100 aa).

This sequence belongs to the universal ribosomal protein uS14 family. In terms of assembly, part of the 30S ribosomal subunit. Contacts proteins S3 and S10.

Binds 16S rRNA, required for the assembly of 30S particles and may also be responsible for determining the conformation of the 16S rRNA at the A site. The protein is Small ribosomal subunit protein uS14 of Acaryochloris marina (strain MBIC 11017).